Here is a 955-residue protein sequence, read N- to C-terminus: Isoleucine--tRNA ligase (955 aa).

The short motif at 58-68 is the 'HIGH' region element; sequence IYANGDIHIGH. Residue glutamate 552 participates in L-isoleucyl-5'-AMP binding. Positions 593–597 match the 'KMSKS' region motif; that stretch reads KMSKS. Lysine 596 is a binding site for ATP. Residues cysteine 918, cysteine 921, cysteine 938, and cysteine 941 each contribute to the Zn(2+) site.

The protein belongs to the class-I aminoacyl-tRNA synthetase family. IleS type 1 subfamily. Monomer. Zn(2+) serves as cofactor.

It localises to the cytoplasm. It carries out the reaction tRNA(Ile) + L-isoleucine + ATP = L-isoleucyl-tRNA(Ile) + AMP + diphosphate. Its function is as follows. Catalyzes the attachment of isoleucine to tRNA(Ile). As IleRS can inadvertently accommodate and process structurally similar amino acids such as valine, to avoid such errors it has two additional distinct tRNA(Ile)-dependent editing activities. One activity is designated as 'pretransfer' editing and involves the hydrolysis of activated Val-AMP. The other activity is designated 'posttransfer' editing and involves deacylation of mischarged Val-tRNA(Ile). In Vesicomyosocius okutanii subsp. Calyptogena okutanii (strain HA), this protein is Isoleucine--tRNA ligase.